Consider the following 466-residue polypeptide: Histidine--tRNA ligase (466 aa).

It belongs to the class-II aminoacyl-tRNA synthetase family. In terms of assembly, homodimer.

The protein resides in the cytoplasm. It carries out the reaction tRNA(His) + L-histidine + ATP = L-histidyl-tRNA(His) + AMP + diphosphate + H(+). In Xylella fastidiosa (strain 9a5c), this protein is Histidine--tRNA ligase (hisS).